Consider the following 491-residue polypeptide: Feruloyl-CoA synthase (491 aa).

Mg(2+) is bound at residue threonine 154. Positions 199, 291, and 295 each coordinate ATP. Glutamate 296 contacts Mg(2+). ATP contacts are provided by aspartate 374 and lysine 391.

This sequence belongs to the ATP-dependent AMP-binding enzyme family. The cofactor is Mg(2+).

The catalysed reaction is (E)-ferulate + ATP + CoA = (E)-feruloyl-CoA + AMP + diphosphate. Catalyzes the formation of (E)-feruloyl-CoA, AMP and diphosphate from (E)-ferulate, CoA and ATP. Involved in the degradation pathway of lignin-derived aromatic compounds of plant cell walls. Catalyzes the first enzymatic step in the conversion of ferulic acid into high value compound vanillin. This Amycolatopsis sp protein is Feruloyl-CoA synthase.